Consider the following 72-residue polypeptide: MPIWSGILVGVVALLAGVALGFFIARKYMMNYLQKNPPINEQMLKMMMMQMGQKPSQKKINQMMSAMNKQMK.

A helical membrane pass occupies residues 3-23; it reads IWSGILVGVVALLAGVALGFF.

This sequence belongs to the UPF0154 family.

It localises to the cell membrane. The polypeptide is UPF0154 protein Bcer98_2334 (Bacillus cytotoxicus (strain DSM 22905 / CIP 110041 / 391-98 / NVH 391-98)).